A 199-amino-acid chain; its full sequence is GTP cyclohydrolase-2 (199 aa).

A GTP-binding site is contributed by 52-56 (RMHSE). The Zn(2+) site is built by cysteine 57, cysteine 68, and cysteine 70. Residues glutamine 73, 94–96 (EGR), and threonine 116 each bind GTP. The active-site Proton acceptor is aspartate 128. The active-site Nucleophile is arginine 130. The GTP site is built by threonine 151 and lysine 156.

The protein belongs to the GTP cyclohydrolase II family. It depends on Zn(2+) as a cofactor.

The enzyme catalyses GTP + 4 H2O = 2,5-diamino-6-hydroxy-4-(5-phosphoribosylamino)-pyrimidine + formate + 2 phosphate + 3 H(+). Its pathway is cofactor biosynthesis; riboflavin biosynthesis; 5-amino-6-(D-ribitylamino)uracil from GTP: step 1/4. Functionally, catalyzes the conversion of GTP to 2,5-diamino-6-ribosylamino-4(3H)-pyrimidinone 5'-phosphate (DARP), formate and pyrophosphate. This is GTP cyclohydrolase-2 from Aliivibrio fischeri (strain ATCC 700601 / ES114) (Vibrio fischeri).